Here is a 360-residue protein sequence, read N- to C-terminus: Photosystem II protein D1 1 (360 aa).

3 consecutive transmembrane segments (helical) span residues 29–46 (YVGW…TAAI), 118–133 (HFLI…QWEL), and 142–156 (WIPV…AATA). Histidine 118 provides a ligand contact to chlorophyll a. Residue tyrosine 126 participates in pheophytin a binding. The [CaMn4O5] cluster site is built by aspartate 170 and glutamate 189. Residues 197 to 218 (FHMIGVAGVFGGALFSAMHGSL) traverse the membrane as a helical segment. Residue histidine 198 coordinates chlorophyll a. A quinone-binding positions include histidine 215 and 264-265 (SF). Histidine 215 lines the Fe cation pocket. Position 272 (histidine 272) interacts with Fe cation. The chain crosses the membrane as a helical span at residues 274–288 (FLAAWPVIGIWFAAL). 4 residues coordinate [CaMn4O5] cluster: histidine 332, glutamate 333, aspartate 342, and alanine 344. Positions 345 to 360 (SGEVQPIALAAPAIAS) are excised as a propeptide.

This sequence belongs to the reaction center PufL/M/PsbA/D family. As to quaternary structure, PSII is composed of 1 copy each of membrane proteins PsbA, PsbB, PsbC, PsbD, PsbE, PsbF, PsbH, PsbI, PsbJ, PsbK, PsbL, PsbM, PsbT, PsbX, PsbY, PsbZ, Psb30/Ycf12, peripheral proteins PsbO, CyanoQ (PsbQ), PsbU, PsbV and a large number of cofactors. It forms dimeric complexes. Requires The D1/D2 heterodimer binds P680, chlorophylls that are the primary electron donor of PSII, and subsequent electron acceptors. It shares a non-heme iron and each subunit binds pheophytin, quinone, additional chlorophylls, carotenoids and lipids. D1 provides most of the ligands for the Mn4-Ca-O5 cluster of the oxygen-evolving complex (OEC). There is also a Cl(-1) ion associated with D1 and D2, which is required for oxygen evolution. The PSII complex binds additional chlorophylls, carotenoids and specific lipids. as cofactor. In terms of processing, tyr-161 forms a radical intermediate that is referred to as redox-active TyrZ, YZ or Y-Z. Post-translationally, C-terminally processed by CtpA; processing is essential to allow assembly of the oxygen-evolving complex and thus photosynthetic growth.

Its subcellular location is the cellular thylakoid membrane. It catalyses the reaction 2 a plastoquinone + 4 hnu + 2 H2O = 2 a plastoquinol + O2. In terms of biological role, photosystem II (PSII) is a light-driven water:plastoquinone oxidoreductase that uses light energy to abstract electrons from H(2)O, generating O(2) and a proton gradient subsequently used for ATP formation. It consists of a core antenna complex that captures photons, and an electron transfer chain that converts photonic excitation into a charge separation. The D1/D2 (PsbA/PsbD) reaction center heterodimer binds P680, the primary electron donor of PSII as well as several subsequent electron acceptors. In Trichormus variabilis (strain ATCC 29413 / PCC 7937) (Anabaena variabilis), this protein is Photosystem II protein D1 1.